A 369-amino-acid chain; its full sequence is Glutamate 5-kinase (369 aa).

Lys-10 lines the ATP pocket. Residues Ser-50, Asp-137, and Asn-149 each coordinate substrate. ATP-binding positions include 169–170 (TD) and 210–216 (TGGMVTK). Positions 276–349 (EGSIFIDEGA…GKHSEEMLAT (74 aa)) constitute a PUA domain.

The protein belongs to the glutamate 5-kinase family.

The protein localises to the cytoplasm. It catalyses the reaction L-glutamate + ATP = L-glutamyl 5-phosphate + ADP. It functions in the pathway amino-acid biosynthesis; L-proline biosynthesis; L-glutamate 5-semialdehyde from L-glutamate: step 1/2. Functionally, catalyzes the transfer of a phosphate group to glutamate to form L-glutamate 5-phosphate. The protein is Glutamate 5-kinase of Desulfitobacterium hafniense (strain Y51).